The following is a 275-amino-acid chain: Myb/SANT-like DNA-binding domain-containing protein 3 (275 aa).

Positions 13 to 78 constitute a Myb-like domain; that stretch reads FSELEKSILL…QLKKCWENIK (66 aa). A phosphoserine mark is found at Ser96 and Ser98. Lys154 participates in a covalent cross-link: Glycyl lysine isopeptide (Lys-Gly) (interchain with G-Cter in SUMO2). Residues 211–247 adopt a coiled-coil conformation; it reads QLIQMNEVHVAKIQQIERECEMAEEEHRIKMEVLNKK. The residue at position 274 (Ser274) is a Phosphoserine.

Belongs to the MSANTD3 family. As to expression, expressed in brain.

In Homo sapiens (Human), this protein is Myb/SANT-like DNA-binding domain-containing protein 3 (MSANTD3).